A 687-amino-acid polypeptide reads, in one-letter code: Protein SDA1 homolog (687 aa).

Disordered regions lie at residues 517 to 549 (SSDEEQEDEDPSGENQEGEEDGQTRAARISQMR), 561 to 587 (MKQLTKEVQPKLGKKRKRATTTEEPQG), and 615 to 687 (TVIA…KSKI). Positions 520–537 (EEQEDEDPSGENQEGEED) are enriched in acidic residues. Residues 644–666 (EKRRKKNFMMMRHNKLVRGKTKR) show a composition bias toward basic residues. Over residues 667 to 680 (SFRDKQIALRDSLL) the composition is skewed to basic and acidic residues.

It belongs to the SDA1 family.

The protein resides in the nucleus. The protein localises to the nucleolus. Required for 60S pre-ribosomal subunits export to the cytoplasm. In Nematostella vectensis (Starlet sea anemone), this protein is Protein SDA1 homolog (sdad1).